Reading from the N-terminus, the 338-residue chain is UDP-3-O-acylglucosamine N-acyltransferase (338 aa).

Residue histidine 239 is the Proton acceptor of the active site.

This sequence belongs to the transferase hexapeptide repeat family. LpxD subfamily. As to quaternary structure, homotrimer.

The enzyme catalyses a UDP-3-O-[(3R)-3-hydroxyacyl]-alpha-D-glucosamine + a (3R)-hydroxyacyl-[ACP] = a UDP-2-N,3-O-bis[(3R)-3-hydroxyacyl]-alpha-D-glucosamine + holo-[ACP] + H(+). It participates in bacterial outer membrane biogenesis; LPS lipid A biosynthesis. Functionally, catalyzes the N-acylation of UDP-3-O-acylglucosamine using 3-hydroxyacyl-ACP as the acyl donor. Is involved in the biosynthesis of lipid A, a phosphorylated glycolipid that anchors the lipopolysaccharide to the outer membrane of the cell. This chain is UDP-3-O-acylglucosamine N-acyltransferase, found in Thermosynechococcus vestitus (strain NIES-2133 / IAM M-273 / BP-1).